Here is a 572-residue protein sequence, read N- to C-terminus: Urocanate hydratase (572 aa).

Residues 48–49 (GG), glutamine 126, 172–174 (GMG), aspartate 192, 238–239 (NA), 259–263 (QTSAH), 268–269 (YL), and tyrosine 317 contribute to the NAD(+) site. The active site involves cysteine 405. Glycine 487 provides a ligand contact to NAD(+). The segment covering 550-559 (EGDEAHEGDA) has biased composition (basic and acidic residues). Positions 550–572 (EGDEAHEGDAAHGSGAAREGDGV) are disordered.

This sequence belongs to the urocanase family. NAD(+) serves as cofactor.

The protein resides in the cytoplasm. It catalyses the reaction 4-imidazolone-5-propanoate = trans-urocanate + H2O. It functions in the pathway amino-acid degradation; L-histidine degradation into L-glutamate; N-formimidoyl-L-glutamate from L-histidine: step 2/3. Functionally, catalyzes the conversion of urocanate to 4-imidazolone-5-propionate. This chain is Urocanate hydratase, found in Streptomyces coelicolor (strain ATCC BAA-471 / A3(2) / M145).